The sequence spans 407 residues: Transcriptional regulator ICP22 homolog (407 aa).

A disordered region spans residues 34–268; that stretch reads RKRRRKLKPQ…STQPGGVPKL (235 aa). Acidic residues predominate over residues 81–241; it reads EREGEGGEEG…EEAEEEEEEA (161 aa).

It belongs to the herpesviridae ICP22 family.

In Saimiriine herpesvirus 2 (strain 11) (SaHV-2), this protein is Transcriptional regulator ICP22 homolog (73).